We begin with the raw amino-acid sequence, 130 residues long: Small ribosomal subunit protein uS8 (130 aa).

Belongs to the universal ribosomal protein uS8 family. Part of the 30S ribosomal subunit. Contacts proteins S5 and S12.

One of the primary rRNA binding proteins, it binds directly to 16S rRNA central domain where it helps coordinate assembly of the platform of the 30S subunit. The chain is Small ribosomal subunit protein uS8 from Photobacterium profundum (strain SS9).